A 582-amino-acid polypeptide reads, in one-letter code: External alternative NADH-ubiquinone oxidoreductase, mitochondrial (582 aa).

A mitochondrion-targeting transit peptide spans 1–30 (MLRLRPAVRAVSVARSVALTRSLHVSVAKF). Positions 46-65 (KQTAGHQGHHQEIPKPDENH) are disordered. Over residues 54–65 (HHQEIPKPDENH) the composition is skewed to basic and acidic residues. 114 to 144 (TLVVLGSGWGSVSFLKKLDTSNYNVIVVSPR) serves as a coordination point for FAD. NAD(+) is bound at residue 277–313 (LHTVVVGGGPTGVEFAAELQDFFEDDLRKWIPDIRDD). Residues 454–501 (LLNGIAKTEDLNNEITNLEKQSEHTFDEQERKNIFAQLESKSRKLRRS) adopt a coiled-coil conformation.

The protein belongs to the NADH dehydrogenase family. The cofactor is FAD.

The protein resides in the mitochondrion inner membrane. It catalyses the reaction a quinone + NADH + H(+) = a quinol + NAD(+). The enzyme catalyses a ubiquinone + NADH + H(+) = a ubiquinol + NAD(+). In terms of biological role, alternative NADH-ubiquinone oxidoreductase which catalyzes the oxidation of mitochondrial NADH does not translocate protons across the inner mitochondrial membrane. This is External alternative NADH-ubiquinone oxidoreductase, mitochondrial (NDH2) from Yarrowia lipolytica (strain CLIB 122 / E 150) (Yeast).